Consider the following 519-residue polypeptide: Ribonuclease Y 1 (519 aa).

The helical transmembrane segment at 3–23 threads the bilayer; the sequence is VPIVILAIIAIVVGVVGGYYL. Residues 92–120 show a composition bias toward basic and acidic residues; that stretch reads QREETLDRKDNSLEKRENSLNRRDKKLSA. The interval 92–124 is disordered; it reads QREETLDRKDNSLEKRENSLNRRDKKLSAEEQN. A KH domain is found at 209 to 272; the sequence is TITVVTLPND…EVAKIALEKL (64 aa). Residues 335–428 enclose the HD domain; it reads ALAHSIEVAK…VSTADIISAT (94 aa).

Belongs to the RNase Y family.

Its subcellular location is the cell membrane. Endoribonuclease that initiates mRNA decay. This Levilactobacillus brevis (strain ATCC 367 / BCRC 12310 / CIP 105137 / JCM 1170 / LMG 11437 / NCIMB 947 / NCTC 947) (Lactobacillus brevis) protein is Ribonuclease Y 1.